Here is a 223-residue protein sequence, read N- to C-terminus: Ribose-5-phosphate isomerase A (223 aa).

Residues 28-31, 81-84, and 94-97 each bind substrate; these read TGST, DGAD, and KGGG. Glutamate 103 functions as the Proton acceptor in the catalytic mechanism. Lysine 121 serves as a coordination point for substrate.

It belongs to the ribose 5-phosphate isomerase family. Homodimer.

The enzyme catalyses aldehydo-D-ribose 5-phosphate = D-ribulose 5-phosphate. It functions in the pathway carbohydrate degradation; pentose phosphate pathway; D-ribose 5-phosphate from D-ribulose 5-phosphate (non-oxidative stage): step 1/1. Catalyzes the reversible conversion of ribose-5-phosphate to ribulose 5-phosphate. In Janthinobacterium sp. (strain Marseille) (Minibacterium massiliensis), this protein is Ribose-5-phosphate isomerase A.